Consider the following 32-residue polypeptide: Cytochrome b6-f complex subunit 7 (32 aa).

A helical transmembrane segment spans residues 9 to 27 (AVLSSVLVLVGLAIGFLLL).

This sequence belongs to the PetM family. The 4 large subunits of the cytochrome b6-f complex are cytochrome b6, subunit IV (17 kDa polypeptide, PetD), cytochrome f and the Rieske protein, while the 4 small subunits are PetG, PetL, PetM and PetN. The complex functions as a dimer.

The protein resides in the plastid. It is found in the chloroplast thylakoid membrane. In terms of biological role, component of the cytochrome b6-f complex, which mediates electron transfer between photosystem II (PSII) and photosystem I (PSI), cyclic electron flow around PSI, and state transitions. This chain is Cytochrome b6-f complex subunit 7, found in Pyropia yezoensis (Susabi-nori).